A 139-amino-acid chain; its full sequence is ATP synthase epsilon chain (139 aa).

The protein belongs to the ATPase epsilon chain family. As to quaternary structure, F-type ATPases have 2 components, CF(1) - the catalytic core - and CF(0) - the membrane proton channel. CF(1) has five subunits: alpha(3), beta(3), gamma(1), delta(1), epsilon(1). CF(0) has three main subunits: a, b and c.

It is found in the cell inner membrane. In terms of biological role, produces ATP from ADP in the presence of a proton gradient across the membrane. This chain is ATP synthase epsilon chain, found in Pectobacterium carotovorum subsp. carotovorum (strain PC1).